We begin with the raw amino-acid sequence, 934 residues long: Phosphoenolpyruvate carboxylase (934 aa).

Active-site residues include His161 and Lys593.

It belongs to the PEPCase type 1 family. Requires Mg(2+) as cofactor.

It catalyses the reaction oxaloacetate + phosphate = phosphoenolpyruvate + hydrogencarbonate. In terms of biological role, forms oxaloacetate, a four-carbon dicarboxylic acid source for the tricarboxylic acid cycle. The chain is Phosphoenolpyruvate carboxylase (ppc) from Mycobacterium leprae (strain TN).